We begin with the raw amino-acid sequence, 504 residues long: Cytochrome P450 3A16 (504 aa).

Cys-443 provides a ligand contact to heme.

Belongs to the cytochrome P450 family. The cofactor is heme.

It localises to the endoplasmic reticulum membrane. It is found in the microsome membrane. It catalyses the reaction an organic molecule + reduced [NADPH--hemoprotein reductase] + O2 = an alcohol + oxidized [NADPH--hemoprotein reductase] + H2O + H(+). Its function is as follows. Cytochromes P450 are a group of heme-thiolate monooxygenases. In liver microsomes, this enzyme is involved in an NADPH-dependent electron transport pathway. It oxidizes a variety of structurally unrelated compounds, including steroids, fatty acids, and xenobiotics. This Mus musculus (Mouse) protein is Cytochrome P450 3A16 (Cyp3a16).